A 101-amino-acid chain; its full sequence is Helix-loop-helix protein 17 (101 aa).

The tract at residues 14-27 (GVRLSINLRERCRM) is basic motif. In terms of domain architecture, bHLH spans 14-68 (GVRLSINLRERCRMHDLNEALDDLRAVIPYAHGGSVRKLSKIATLLLAKNHIIMQ). Residues 28–68 (HDLNEALDDLRAVIPYAHGGSVRKLSKIATLLLAKNHIIMQ) form a helix-loop-helix motif region.

In terms of tissue distribution, expressed in neuronal tissues of the head, including sheath cells of the cephalic sensilla (CEPsh) glia.

The protein resides in the nucleus. Functionally, probable transcription factor that regulates the expression of dopamine receptors dop-1, dop-2 and dop-3 and thus dopamine-dependent behaviors. May act redundantly with hlh-31 and hlh-32 to regulate ventral CEPsh glia functions. May play a role in chemotactic responses in larvae. This is Helix-loop-helix protein 17 from Caenorhabditis elegans.